A 326-amino-acid chain; its full sequence is Transcription cofactor vestigial-like protein 3 (326 aa).

The interval 57–80 (VTLPSKQEEEDEEEEEEEKDQPAE) is disordered. Residue Lys62 forms a Glycyl lysine isopeptide (Lys-Gly) (interchain with G-Cter in SUMO2) linkage. Residues 64–75 (EEEDEEEEEEEK) show a composition bias toward acidic residues. Lys126 participates in a covalent cross-link: Glycyl lysine isopeptide (Lys-Gly) (interchain with G-Cter in SUMO2). 2 disordered regions span residues 175–203 (PPGT…PPAV) and 233–256 (HAHM…SALD). The span at 233-249 (HAHMHHRHRHHHHHHHP) shows a compositional bias: basic residues.

It belongs to the vestigial family. As to expression, enriched in placenta.

It is found in the nucleus. Functionally, may act as a specific coactivator for the mammalian TEFs. The protein is Transcription cofactor vestigial-like protein 3 (VGLL3) of Homo sapiens (Human).